A 393-amino-acid chain; its full sequence is Triacylglycerol lipase 1 (393 aa).

An N-terminal signal peptide occupies residues 1–20 (MKWLLVAVLTSLTIFSALTQ). Asn-41 is a glycosylation site (N-linked (GlcNAc...) asparagine). Ser-166 (nucleophile) is an active-site residue. Residue Asn-261 is glycosylated (N-linked (GlcNAc...) asparagine). Residues Asp-334 and His-363 each act as charge relay system in the active site.

It belongs to the AB hydrolase superfamily. Lipase family. As to expression, expressed in seedlings, roots, leaves, flowers and siliques. Specifically expressed in the epidermis.

Its subcellular location is the secreted. The enzyme catalyses a triacylglycerol + H2O = a diacylglycerol + a fatty acid + H(+). It carries out the reaction 1,2,3-tributanoylglycerol + H2O = dibutanoylglycerol + butanoate + H(+). It catalyses the reaction 1,2,3-trioctanoylglycerol + H2O = dioctanoylglycerol + octanoate + H(+). It participates in lipid metabolism; glycerolipid metabolism. Its function is as follows. Triacylglycerol (TAG) lipase active on triolein, trioctanoin, tributyrin and 1,3-Diolein, but not on phospho- and galactolipids. Involved but dispensable for TAG storage breakdown during seed germination. This Arabidopsis thaliana (Mouse-ear cress) protein is Triacylglycerol lipase 1.